The following is a 597-amino-acid chain: Electron transfer flavoprotein-ubiquinone oxidoreductase, mitochondrial (597 aa).

FAD is bound at residue 53–67 (VVIVGGGPSGLSAAI). Residues 91-112 (IGGHTLSGAVIETRALDELIPN) lie within the membrane without spanning it. Glycine 285 and glycine 286 together coordinate a ubiquinone. The stretch at 409–426 (IDPATYDKNIRDTYVVKE) is an intramembrane region. Cysteine 540, cysteine 566, cysteine 569, and cysteine 572 together coordinate [4Fe-4S] cluster. A 4Fe-4S ferredoxin-type domain is found at 557–586 (KRLQINAQNCIHCKTCDIKDPQQNINWVTP).

Belongs to the ETF-QO/FixC family. In terms of assembly, monomer. [4Fe-4S] cluster is required as a cofactor. Requires FAD as cofactor.

It localises to the mitochondrion inner membrane. It catalyses the reaction a ubiquinone + reduced [electron-transfer flavoprotein] = a ubiquinol + oxidized [electron-transfer flavoprotein] + H(+). In terms of biological role, accepts electrons from ETF and reduces ubiquinone. The sequence is that of Electron transfer flavoprotein-ubiquinone oxidoreductase, mitochondrial (let-721) from Caenorhabditis elegans.